We begin with the raw amino-acid sequence, 303 residues long: tRNA dimethylallyltransferase (303 aa).

Position 9 to 16 (9 to 16) interacts with ATP; it reads GPTASGKS. 11–16 contributes to the substrate binding site; it reads TASGKS. The interaction with substrate tRNA stretch occupies residues 34 to 37; sequence DSKQ.

This sequence belongs to the IPP transferase family. In terms of assembly, monomer. Requires Mg(2+) as cofactor.

The enzyme catalyses adenosine(37) in tRNA + dimethylallyl diphosphate = N(6)-dimethylallyladenosine(37) in tRNA + diphosphate. Its function is as follows. Catalyzes the transfer of a dimethylallyl group onto the adenine at position 37 in tRNAs that read codons beginning with uridine, leading to the formation of N6-(dimethylallyl)adenosine (i(6)A). In Ehrlichia chaffeensis (strain ATCC CRL-10679 / Arkansas), this protein is tRNA dimethylallyltransferase.